Here is a 502-residue protein sequence, read N- to C-terminus: L-arabinose isomerase (502 aa).

Mn(2+) is bound by residues E306, E333, H350, and H449.

The protein belongs to the arabinose isomerase family. Mn(2+) is required as a cofactor.

The catalysed reaction is beta-L-arabinopyranose = L-ribulose. Its pathway is carbohydrate degradation; L-arabinose degradation via L-ribulose; D-xylulose 5-phosphate from L-arabinose (bacterial route): step 1/3. In terms of biological role, catalyzes the conversion of L-arabinose to L-ribulose. The chain is L-arabinose isomerase from Flavobacterium johnsoniae (strain ATCC 17061 / DSM 2064 / JCM 8514 / BCRC 14874 / CCUG 350202 / NBRC 14942 / NCIMB 11054 / UW101) (Cytophaga johnsonae).